Consider the following 444-residue polypeptide: NADH-ubiquinone oxidoreductase chain 4 (444 aa).

13 consecutive transmembrane segments (helical) span residues 4–24 (YLFM…WWLV), 28–48 (IFLL…LSMI), 53–73 (GVDF…CLMI), 87–107 (NFFV…FSSL), 109–129 (LFSF…LILG), 141–161 (VYLM…LFSI), 173–193 (LIDF…AFLV), 212–232 (PISG…YGIF), 245–265 (FNYF…FVCF), 272–294 (SLIA…TMNW), 306–326 (GHGI…ELLG), 330–350 (LLIN…WFLL), and 373–393 (IISW…FSAV).

This sequence belongs to the complex I subunit 4 family.

It is found in the mitochondrion membrane. The enzyme catalyses a ubiquinone + NADH + 5 H(+)(in) = a ubiquinol + NAD(+) + 4 H(+)(out). In terms of biological role, core subunit of the mitochondrial membrane respiratory chain NADH dehydrogenase (Complex I) that is believed to belong to the minimal assembly required for catalysis. Complex I functions in the transfer of electrons from NADH to the respiratory chain. The immediate electron acceptor for the enzyme is believed to be ubiquinone. This Locusta migratoria (Migratory locust) protein is NADH-ubiquinone oxidoreductase chain 4 (ND4).